The following is a 456-amino-acid chain: Cysteine synthase 2 (456 aa).

Residues 9–29 (VYGTVALTAAFAAGILVTLGF) form a helical membrane-spanning segment.

The protein belongs to the cysteine synthase/cystathionine beta-synthase family. Requires pyridoxal 5'-phosphate as cofactor.

Its subcellular location is the mitochondrion outer membrane. The enzyme catalyses O-acetyl-L-serine + hydrogen sulfide = L-cysteine + acetate. Functionally, putative cysteine synthase that catalyzes the conversion of O-acetyl-L-serine (OAS) into cysteine, the last step in the cysteine biosynthesis pathway. However, in contrast to cysteine synthase cys-17, this CS-like protein may not function in cysteine biosynthesis. This chain is Cysteine synthase 2, found in Neurospora crassa (strain ATCC 24698 / 74-OR23-1A / CBS 708.71 / DSM 1257 / FGSC 987).